The primary structure comprises 237 residues: Small ribosomal subunit protein eS4 (237 aa).

The S4 RNA-binding domain maps to 37-100; it reads IPLAVLLRDV…NEYYRIIPDP (64 aa).

The protein belongs to the eukaryotic ribosomal protein eS4 family.

The protein is Small ribosomal subunit protein eS4 of Caldivirga maquilingensis (strain ATCC 700844 / DSM 13496 / JCM 10307 / IC-167).